The chain runs to 122 residues: Acidic phospholipase A2 1 (122 aa).

7 disulfide bridges follow: cysteine 26–cysteine 115, cysteine 28–cysteine 44, cysteine 43–cysteine 94, cysteine 49–cysteine 122, cysteine 50–cysteine 87, cysteine 57–cysteine 81, and cysteine 75–cysteine 85. Tyrosine 27, glycine 29, and glycine 31 together coordinate Ca(2+). Residue histidine 47 is part of the active site. Aspartate 48 is a binding site for Ca(2+). Residue aspartate 88 is part of the active site.

Belongs to the phospholipase A2 family. Group II subfamily. D49 sub-subfamily. As to quaternary structure, homodimer. The cofactor is Ca(2+). Expressed by the venom gland.

It is found in the secreted. The enzyme catalyses a 1,2-diacyl-sn-glycero-3-phosphocholine + H2O = a 1-acyl-sn-glycero-3-phosphocholine + a fatty acid + H(+). PLA2 catalyzes the calcium-dependent hydrolysis of the 2-acyl groups in 3-sn-phosphoglycerides. The protein is Acidic phospholipase A2 1 of Protobothrops mucrosquamatus (Taiwan habu).